Here is a 403-residue protein sequence, read N- to C-terminus: E2F transcription factor-like E2FE (403 aa).

Residues Arg34–Gly99 mediate DNA binding. The segment at Val128–Asp167 is disordered. Over residues Gln142–Ser152 the composition is skewed to low complexity. Polar residues predominate over residues Lys153–Pro163. The DNA-binding element occupies Arg169–Gly250. The tract at residues Val282–His319 is disordered.

It belongs to the E2F/DP family. Expressed exclusively in mitotically dividing cells. Highly expressed in young leaves and mature flowers. Lower expression in young stalk and in young and mature flowers.

The protein localises to the nucleus. Functionally, inhibitor of E2F-dependent activation of gene expression. Binds specifically the E2 recognition site without interacting with DP proteins and prevents transcription activation by E2F/DP heterodimers. Controls the timing of endocycle onset and inhibits endoreduplication. The chain is E2F transcription factor-like E2FE (E2FE) from Arabidopsis thaliana (Mouse-ear cress).